We begin with the raw amino-acid sequence, 289 residues long: T-cell ecto-ADP-ribosyltransferase 2 (289 aa).

Residues 1 to 20 (MTSKIFKFFLTWWLTQQVTG) form the signal peptide. 2 disulfide bridges follow: cysteine 41/cysteine 246 and cysteine 141/cysteine 193. Positions 61-241 (EELKLEWEKA…IFLDSPERKK (181 aa)) constitute a TR mART core domain. The N-linked (GlcNAc...) asparagine glycan is linked to asparagine 79. Tyrosine 98, arginine 146, and glutamine 164 together coordinate NAD(+). The active site involves arginine 146. Residue serine 167 is part of the active site. Serine 202 provides a ligand contact to NAD(+). Glutamate 209 is a catalytic residue. Asparagine 249 is a glycosylation site (N-linked (GlcNAc...) asparagine). Residue serine 260 is the site of GPI-anchor amidated serine attachment. The propeptide at 261–289 (ISGSRESCVSLFLVVLLGLLVQQLTLAEL) is removed in mature form.

This sequence belongs to the Arg-specific ADP-ribosyltransferase family. In terms of tissue distribution, expressed in spleen, intestine and thymus.

It is found in the cell membrane. It catalyses the reaction L-arginyl-[protein] + NAD(+) = N(omega)-(ADP-D-ribosyl)-L-arginyl-[protein] + nicotinamide + H(+). The catalysed reaction is NAD(+) + H2O = ADP-D-ribose + nicotinamide + H(+). Functionally, has both NAD(+) glycohydrolase and ADP-ribosyltransferase activity. This chain is T-cell ecto-ADP-ribosyltransferase 2 (Art2b), found in Mus musculus (Mouse).